The following is a 226-amino-acid chain: Neuromodulin (226 aa).

The disordered stretch occupies residues 1–226 (MLCCMRRTKQ…EDPEADQEHA (226 aa)). S-palmitoyl cysteine attachment occurs at residues Cys3 and Cys4. A compositionally biased stretch (basic and acidic residues) spans 9–32 (KQVEKNDEDQKIEQDGVKPEDKAH). Positions 31–60 (AHKAATKIQASFRGHITRKKLKDEKKGDAP) constitute an IQ domain. Phosphoserine; by PHK and PKC is present on Ser41. Residues 51-84 (LKDEKKGDAPAAEAEAKEKDDAPVADGVEKKEGD) show a composition bias toward basic and acidic residues. Residues 85-97 (GSATTDAAPATSP) show a composition bias toward low complexity. 2 positions are modified to phosphoserine: Ser86 and Ser96. Positions 98-127 (KAEEPSKAGDAPSEEKKGEGDAAPSEEKAG) are enriched in basic and acidic residues. Residues 128 to 139 (SAETESAAKATT) show a composition bias toward low complexity. 3 positions are modified to phosphoserine: Ser142, Ser144, and Ser145. The span at 146 to 158 (KAEDGPAKEEPKQ) shows a compositional bias: basic and acidic residues. The span at 159-192 (ADVPAAVTDAAATTPAAEDAAKAAQPPTETAESS) shows a compositional bias: low complexity. Thr172 is subject to Phosphothreonine. Ser191 and Ser192 each carry phosphoserine. Residues 201 to 214 (VDEAKPKESARQDE) are compositionally biased toward basic and acidic residues. Over residues 215-226 (GKEDPEADQEHA) the composition is skewed to acidic residues.

The protein belongs to the neuromodulin family. As to quaternary structure, identified in a complex containing FGFR4, NCAM1, CDH2, PLCG1, FRS2, SRC, SHC1, GAP43 and CTTN. Interacts (via IQ domain) with calmodulin. Binds calmodulin with a greater affinity in the absence of Ca(2+) than in its presence. In terms of processing, phosphorylated. Phosphorylation of this protein by a protein kinase C is specifically correlated with certain forms of synaptic plasticity. Post-translationally, palmitoylated by ZDHHC3. Palmitoylation is regulated by ARF6 and is essential for plasma membrane association and axonal and dendritic filopodia induction. Deacylated by LYPLA2. Expressed in hippocampal neurons, with highest levels of expression in the CA4 and CA3 neurons and lower levels in CA1 neurons. Expressed in the dorsal root ganglion.

The protein localises to the cell membrane. It is found in the cell projection. The protein resides in the growth cone. Its subcellular location is the growth cone membrane. It localises to the synapse. The protein localises to the filopodium membrane. It is found in the perikaryon. The protein resides in the dendrite. Its subcellular location is the axon. It localises to the cytoplasm. In terms of biological role, this protein is associated with nerve growth. It is a major component of the motile 'growth cones' that form the tips of elongating axons. Plays a role in axonal and dendritic filopodia induction. The protein is Neuromodulin (Gap43) of Rattus norvegicus (Rat).